The sequence spans 154 residues: Transcriptional repressor NrdR (154 aa).

A zinc finger lies at 3–34; sequence CPFCAHPDTRVADSRLMEERNAVRRRRHCPNC. Residues 49-139 enclose the ATP-cone domain; the sequence is PAVIGPDKKR…LHKRFDNPAD (91 aa).

The protein belongs to the NrdR family. It depends on Zn(2+) as a cofactor.

Negatively regulates transcription of bacterial ribonucleotide reductase nrd genes and operons by binding to NrdR-boxes. This Neisseria meningitidis serogroup B (strain ATCC BAA-335 / MC58) protein is Transcriptional repressor NrdR.